The chain runs to 394 residues: MRSLSIFGATGSIGESTFDLVMRKGGPEAFRTVALTGGRNVARLAEMARALKAELAVTAHEECLPALREALAGSGTEVAGGTQAIAEAADRPADWTMSAIVGAAGLVPGMRALKHGRTLALANKESLVTAGQLLMRTAEENGATILPVDSEHSAVFQALAGEDTTCVERVIITASGGPFRDWTLEQIRGCTVAQAMAHPNWSMGQRISIDSASMFNKALELIETREFFGFEPERIEAVVHPQSIVHALVGFCDGGIMAHLGPADMRHAIGFALNWPGRGEVPVARLDLAQIANLTFQKPDEERFPALRLAREVMAARGLSGAAFNAAKEIALDHFIAGNIGFLDMAAVVEEALSAVSADPLFGKVPSTLEEVLAMDHLARKAAEEAASFRQQKR.

NADPH-binding residues include Thr10, Gly11, Ser12, Ile13, Gly38, Arg39, Asn40, and Asn123. Position 124 (Lys124) interacts with 1-deoxy-D-xylulose 5-phosphate. Glu125 contacts NADPH. A Mn(2+)-binding site is contributed by Asp149. The 1-deoxy-D-xylulose 5-phosphate site is built by Ser150, Glu151, Ser175, and His198. Glu151 provides a ligand contact to Mn(2+). Gly204 lines the NADPH pocket. The 1-deoxy-D-xylulose 5-phosphate site is built by Ser211, Asn216, Lys217, and Glu220. Mn(2+) is bound at residue Glu220.

Belongs to the DXR family. Mg(2+) serves as cofactor. It depends on Mn(2+) as a cofactor.

The catalysed reaction is 2-C-methyl-D-erythritol 4-phosphate + NADP(+) = 1-deoxy-D-xylulose 5-phosphate + NADPH + H(+). It functions in the pathway isoprenoid biosynthesis; isopentenyl diphosphate biosynthesis via DXP pathway; isopentenyl diphosphate from 1-deoxy-D-xylulose 5-phosphate: step 1/6. Catalyzes the NADPH-dependent rearrangement and reduction of 1-deoxy-D-xylulose-5-phosphate (DXP) to 2-C-methyl-D-erythritol 4-phosphate (MEP). The polypeptide is 1-deoxy-D-xylulose 5-phosphate reductoisomerase (Cereibacter sphaeroides (strain ATCC 17025 / ATH 2.4.3) (Rhodobacter sphaeroides)).